The chain runs to 399 residues: Phosphoglycerate kinase (399 aa).

Residues 22–24 (DFN), arginine 38, 61–64 (HLGR), arginine 119, and arginine 152 contribute to the substrate site. ATP is bound by residues lysine 205, glycine 296, glutamate 327, and 353–356 (GGDT).

This sequence belongs to the phosphoglycerate kinase family. In terms of assembly, monomer.

Its subcellular location is the cytoplasm. It catalyses the reaction (2R)-3-phosphoglycerate + ATP = (2R)-3-phospho-glyceroyl phosphate + ADP. Its pathway is carbohydrate degradation; glycolysis; pyruvate from D-glyceraldehyde 3-phosphate: step 2/5. The chain is Phosphoglycerate kinase from Nitratiruptor sp. (strain SB155-2).